Here is a 242-residue protein sequence, read N- to C-terminus: Ubiquinone/menaquinone biosynthesis C-methyltransferase UbiE (242 aa).

S-adenosyl-L-methionine-binding positions include T69, D87, and 114–115; that span reads NA.

Belongs to the class I-like SAM-binding methyltransferase superfamily. MenG/UbiE family.

The catalysed reaction is a 2-demethylmenaquinol + S-adenosyl-L-methionine = a menaquinol + S-adenosyl-L-homocysteine + H(+). The enzyme catalyses a 2-methoxy-6-(all-trans-polyprenyl)benzene-1,4-diol + S-adenosyl-L-methionine = a 5-methoxy-2-methyl-3-(all-trans-polyprenyl)benzene-1,4-diol + S-adenosyl-L-homocysteine + H(+). It functions in the pathway quinol/quinone metabolism; menaquinone biosynthesis; menaquinol from 1,4-dihydroxy-2-naphthoate: step 2/2. Its pathway is cofactor biosynthesis; ubiquinone biosynthesis. In terms of biological role, methyltransferase required for the conversion of demethylmenaquinol (DMKH2) to menaquinol (MKH2) and the conversion of 2-polyprenyl-6-methoxy-1,4-benzoquinol (DDMQH2) to 2-polyprenyl-3-methyl-6-methoxy-1,4-benzoquinol (DMQH2). This Zymomonas mobilis subsp. mobilis (strain ATCC 31821 / ZM4 / CP4) protein is Ubiquinone/menaquinone biosynthesis C-methyltransferase UbiE.